A 440-amino-acid polypeptide reads, in one-letter code: Tuliposide B-converting enzyme 1, amyloplastic (440 aa).

Residues 1–58 (MSIVSFCSSLPAGPHGFKHGRGTRDMVHMPCIVRRTARSPAQACRLLRWNKYHCAAVP) constitute an amyloplast transit peptide. The active-site Acyl-ester intermediate is the S232. Catalysis depends on charge relay system residues D325 and H357.

It belongs to the AB hydrolase superfamily. In terms of assembly, homodimer. In terms of processing, not glycosylated. As to expression, expressed in the pollen grains.

It is found in the plastid. The protein resides in the amyloplast. It carries out the reaction 6-tuliposide B = tulipalin B + D-glucose. With respect to regulation, inhibited by Ag(+), Cu(2+), Fe(2+), Hg(2+), V(3+) and phenylmethylsulfonyl fluoride (PMSF). Functionally, lactone-forming carboxylesterase, specifically catalyzing intramolecular transesterification, but not hydrolysis. Involved in the biosynthesis of tulipalins, defensive chemicals that show antimicrobial activities against a broad range of strains of bacteria and fungi. Substrates are 6-tuliposide B &gt; 6-tuliposide A. This chain is Tuliposide B-converting enzyme 1, amyloplastic, found in Tulipa gesneriana (Garden tulip).